We begin with the raw amino-acid sequence, 796 residues long: MNQTASVSHHIKCQPSKTIKELGSNSPPQRNWKGIAIALLVILVVCSLITMSVILLTPDELTNSSETRLSLEDLFRKDFVLHDPEARWINDTDVVYKSENGHVIKLNIETNATTLLLENTTFVTFKASRHSVSPDLKYVLLAYDVKQIFHYSYTASYVIYNIHTREVWELNPPEVEDSVLQYAAWGVQGQQLIYIFENNIYYQPDIKSSSLRLTSSGKEEIIFNGIADWLYEEELLHSHIAHWWSPDGERLAFLMINDSLVPTMVIPRFTGALYPKGKQYPYPKAGQVNPTIKLYVVNLYGPTHTLELMPPDSFKSREYYITMVKWVSNTKTVVRWLNRAQNISILTVCETTTGACSKKYEMTSDTWLSQQNEEPVFSRDGSKFFMTVPVKQGGRGEFHHVAMFLIQSKSEQITVRHLTSGNWEVIKILAYDETTQKIYFLSTESSPRGRQLYSASTEGLLNRQCISCNFMKEQCTYFDASFSPMNQHFLLFCEGPRVPVVSLHSTDNPAKYFILESNSMLKEAILKKKIGKPEIKILHIDDYELPLQLSLPKDFMDRNQYALLLIMDEEPGGQLVTDKFHIDWDSVLIDMDNVIVARFDGRGSGFQGLKILQEIHRRLGSVEVKDQITAVKFLLKLPYIDSKRLSIFGKGYGGYIASMILKSDEKLFKCGSVVAPITDLKLYASAFSERYLGMPSKEESTYQAASVLHNVHGLKEENILIIHGTADTKVHFQHSAELIKHLIKAGVNYTMQVYPDEGHNVSEKSKYHLYSTILKFFSDCLKEEISVLPQEPEEDE.

Residues 1–34 (MNQTASVSHHIKCQPSKTIKELGSNSPPQRNWKG) are Cytoplasmic-facing. The interval 1 to 56 (MNQTASVSHHIKCQPSKTIKELGSNSPPQRNWKGIAIALLVILVVCSLITMSVILL) is mediates effects on KCND2. Residues 35 to 55 (IAIALLVILVVCSLITMSVIL) traverse the membrane as a helical; Signal-anchor for type II membrane protein segment. The Extracellular portion of the chain corresponds to 56 to 796 (LTPDELTNSS…VLPQEPEEDE (741 aa)). N-linked (GlcNAc...) asparagine glycosylation is found at Asn90, Asn111, and Asn119. Tyr138 and Tyr143 each carry phosphotyrosine. 3 N-linked (GlcNAc...) asparagine glycosylation sites follow: Asn257, Asn342, and Asn748.

This sequence belongs to the peptidase S9B family. DPPIV subfamily. As to quaternary structure, may form oligomers. Interacts with KCND1. Interacts with KCND2. In terms of processing, N-glycosylation is important for cell surface expression, specially at Asn-257, which is crucial. In terms of tissue distribution, found in serum, T-cells and brain (at protein level). Expressed in brain, pancreas, spinal cord and adrenal glands.

It localises to the cell membrane. Its function is as follows. Promotes cell surface expression of the potassium channel KCND2. Modulates the activity and gating characteristics of the potassium channel KCND2. Has no dipeptidyl aminopeptidase activity. The polypeptide is Inactive dipeptidyl peptidase 10 (DPP10) (Homo sapiens (Human)).